We begin with the raw amino-acid sequence, 328 residues long: Cytochrome c biogenesis protein CcsA (328 aa).

The next 8 helical transmembrane spans lie at phenylalanine 15–proline 35, leucine 36–leucine 56, isoleucine 68–isoleucine 88, leucine 97–leucine 117, valine 142–isoleucine 162, valine 236–asparagine 256, tryptophan 263–leucine 283, and alanine 297–leucine 317.

Belongs to the CcmF/CycK/Ccl1/NrfE/CcsA family. May interact with ccs1.

It localises to the cellular thylakoid membrane. Required during biogenesis of c-type cytochromes (cytochrome c6 and cytochrome f) at the step of heme attachment. The protein is Cytochrome c biogenesis protein CcsA of Microcystis aeruginosa (strain NIES-843 / IAM M-2473).